A 517-amino-acid polypeptide reads, in one-letter code: Aspartyl/glutamyl-tRNA(Asn/Gln) amidotransferase subunit B (517 aa).

This sequence belongs to the GatB/GatE family. GatB subfamily. In terms of assembly, heterotrimer of A, B and C subunits.

It carries out the reaction L-glutamyl-tRNA(Gln) + L-glutamine + ATP + H2O = L-glutaminyl-tRNA(Gln) + L-glutamate + ADP + phosphate + H(+). The enzyme catalyses L-aspartyl-tRNA(Asn) + L-glutamine + ATP + H2O = L-asparaginyl-tRNA(Asn) + L-glutamate + ADP + phosphate + 2 H(+). In terms of biological role, allows the formation of correctly charged Asn-tRNA(Asn) or Gln-tRNA(Gln) through the transamidation of misacylated Asp-tRNA(Asn) or Glu-tRNA(Gln) in organisms which lack either or both of asparaginyl-tRNA or glutaminyl-tRNA synthetases. The reaction takes place in the presence of glutamine and ATP through an activated phospho-Asp-tRNA(Asn) or phospho-Glu-tRNA(Gln). This is Aspartyl/glutamyl-tRNA(Asn/Gln) amidotransferase subunit B from Thermobifida fusca (strain YX).